A 213-amino-acid polypeptide reads, in one-letter code: Peptide methionine sulfoxide reductase MsrA (213 aa).

The active site involves cysteine 52.

The protein belongs to the MsrA Met sulfoxide reductase family.

It carries out the reaction L-methionyl-[protein] + [thioredoxin]-disulfide + H2O = L-methionyl-(S)-S-oxide-[protein] + [thioredoxin]-dithiol. It catalyses the reaction [thioredoxin]-disulfide + L-methionine + H2O = L-methionine (S)-S-oxide + [thioredoxin]-dithiol. Functionally, has an important function as a repair enzyme for proteins that have been inactivated by oxidation. Catalyzes the reversible oxidation-reduction of methionine sulfoxide in proteins to methionine. The chain is Peptide methionine sulfoxide reductase MsrA from Enterobacter sp. (strain 638).